Reading from the N-terminus, the 156-residue chain is Small ribosomal subunit protein uS7 (156 aa).

It belongs to the universal ribosomal protein uS7 family. Part of the 30S ribosomal subunit. Contacts proteins S9 and S11.

Its function is as follows. One of the primary rRNA binding proteins, it binds directly to 16S rRNA where it nucleates assembly of the head domain of the 30S subunit. Is located at the subunit interface close to the decoding center, probably blocks exit of the E-site tRNA. The protein is Small ribosomal subunit protein uS7 of Dichelobacter nodosus (strain VCS1703A).